The sequence spans 491 residues: MNANELTIAEARDALAKGELSAVDLTMACLTAIDAGTPLNAFVHATPEIALDQARAADARRGAEAGALNGIPLGIKDLFCTRGVASQAASNILRGFKPEYESTVTSKLFEAGAVMLGKLNMDEFAMGSSNETSCYGDAVNPWKVDDRRLTPGGSSGGSAAAVAADLCLAATGTDTGGSIRQPAAFTGIVGIKPTYGRVSRWGIVAFASSLDQAGPMTKSVRDAAILLGAMAGHDPKDSTSADIPVPDFEAALTGDIRGRKIGIPREYRMEGMPAEIEALWARGREMLADAGAEIVDISLPHTKYALPAYYVIAPAEASSNLARYDGVRYGHRARLGQGDGIVDMYEKTRAEGFGKEVQRRVMIGTYVLSAGFYDAYYNRARKVRALIKRDFDEAFAAGVDAILTPATPSSAFGLGEMADADPVAMYLNDVFTVTVNLAGLPGISVPVGLDAKGLPLGLQLIGRPWDEAGLLNHAHVLERAAGFVEKPRKWW.

Residues K76 and S154 each act as charge relay system in the active site. S178 acts as the Acyl-ester intermediate in catalysis.

The protein belongs to the amidase family. GatA subfamily. As to quaternary structure, heterotrimer of A, B and C subunits.

It catalyses the reaction L-glutamyl-tRNA(Gln) + L-glutamine + ATP + H2O = L-glutaminyl-tRNA(Gln) + L-glutamate + ADP + phosphate + H(+). Allows the formation of correctly charged Gln-tRNA(Gln) through the transamidation of misacylated Glu-tRNA(Gln) in organisms which lack glutaminyl-tRNA synthetase. The reaction takes place in the presence of glutamine and ATP through an activated gamma-phospho-Glu-tRNA(Gln). The sequence is that of Glutamyl-tRNA(Gln) amidotransferase subunit A from Cereibacter sphaeroides (strain KD131 / KCTC 12085) (Rhodobacter sphaeroides).